The sequence spans 346 residues: Biotin synthase (346 aa).

In terms of domain architecture, Radical SAM core spans 38–256 (RQVQVSTLLS…IAVARIMMPT (219 aa)). The [4Fe-4S] cluster site is built by C53, C57, and C60. Residues C97, C128, C188, and R260 each coordinate [2Fe-2S] cluster.

Belongs to the radical SAM superfamily. Biotin synthase family. As to quaternary structure, homodimer. Requires [4Fe-4S] cluster as cofactor. [2Fe-2S] cluster serves as cofactor.

The catalysed reaction is (4R,5S)-dethiobiotin + (sulfur carrier)-SH + 2 reduced [2Fe-2S]-[ferredoxin] + 2 S-adenosyl-L-methionine = (sulfur carrier)-H + biotin + 2 5'-deoxyadenosine + 2 L-methionine + 2 oxidized [2Fe-2S]-[ferredoxin]. Its pathway is cofactor biosynthesis; biotin biosynthesis; biotin from 7,8-diaminononanoate: step 2/2. Catalyzes the conversion of dethiobiotin (DTB) to biotin by the insertion of a sulfur atom into dethiobiotin via a radical-based mechanism. This is Biotin synthase from Cronobacter sakazakii (strain ATCC BAA-894) (Enterobacter sakazakii).